We begin with the raw amino-acid sequence, 436 residues long: Histone acetyltransferase type B subunit 2 (436 aa).

Residues 1–19 (MEPYDDGFIEEQEEQEEER) are compositionally biased toward acidic residues. A disordered region spans residues 1–22 (MEPYDDGFIEEQEEQEEERTEE). WD repeat units lie at residues 136–176 (DHKG…SLPT), 187–227 (GHTK…KGNK), 237–277 (HHSS…TTRA), 284–324 (QHRD…TKLH), and 328–368 (CHTD…EEQT). The tract at residues 370–374 (DDAQD) is interaction with the histone H4 N-terminus. One copy of the WD 6 repeat lies at 385 to 425 (GHTNRISDFSWNLNDPWVLCSAAEDNLLQVWKVADAIVGKD).

Belongs to the WD repeat RBAP46/RBAP48/MSI1 family. Component of the HAT-B complex composed of at least hat1 and hat2. The HAT-B complex binds to histone H4 tail.

The protein localises to the cytoplasm. It localises to the nucleus. Functionally, regulatory subunit of the histone acetylase B (HAT-B) complex. The complex acetylates 'Lys-12' of histone H4 which is required for telomeric silencing. The protein is Histone acetyltransferase type B subunit 2 (hat2) of Aspergillus oryzae (strain ATCC 42149 / RIB 40) (Yellow koji mold).